A 537-amino-acid polypeptide reads, in one-letter code: Phosphoenolpyruvate carboxykinase (ATP) (537 aa).

Residues R61, Y195, and K201 each contribute to the substrate site. Residues K201, H220, and 236 to 244 (GLSGTGKTT) contribute to the ATP site. Residues K201 and H220 each contribute to the Mn(2+) site. Residue D257 coordinates Mn(2+). Residues E285, R323, and T448 each contribute to the ATP site. R323 is a binding site for substrate.

The protein belongs to the phosphoenolpyruvate carboxykinase (ATP) family. Requires Mn(2+) as cofactor.

Its subcellular location is the cytoplasm. It carries out the reaction oxaloacetate + ATP = phosphoenolpyruvate + ADP + CO2. It participates in carbohydrate biosynthesis; gluconeogenesis. Involved in the gluconeogenesis. Catalyzes the conversion of oxaloacetate (OAA) to phosphoenolpyruvate (PEP) through direct phosphoryl transfer between the nucleoside triphosphate and OAA. This Rhodopseudomonas palustris (strain HaA2) protein is Phosphoenolpyruvate carboxykinase (ATP).